Consider the following 475-residue polypeptide: UDP-N-acetylmuramate--L-alanine ligase (475 aa).

114 to 120 is an ATP binding site; that stretch reads GTHGKTT.

The protein belongs to the MurCDEF family.

The protein localises to the cytoplasm. The catalysed reaction is UDP-N-acetyl-alpha-D-muramate + L-alanine + ATP = UDP-N-acetyl-alpha-D-muramoyl-L-alanine + ADP + phosphate + H(+). It functions in the pathway cell wall biogenesis; peptidoglycan biosynthesis. Its function is as follows. Cell wall formation. The polypeptide is UDP-N-acetylmuramate--L-alanine ligase (Bartonella bacilliformis (strain ATCC 35685 / KC583 / Herrer 020/F12,63)).